A 355-amino-acid chain; its full sequence is Holliday junction branch migration complex subunit RuvB (355 aa).

The segment at 4–190 (TDKLAAERII…FGIVARLEFY (187 aa)) is large ATPase domain (RuvB-L). Residues Leu-29, Arg-30, Gly-71, Lys-74, Thr-75, Thr-76, 137 to 139 (EDY), Arg-180, Tyr-190, and Arg-227 each bind ATP. Thr-75 lines the Mg(2+) pocket. A small ATPAse domain (RuvB-S) region spans residues 191–261 (DADQLSRIVQ…IADAALAMLD (71 aa)). Positions 264 to 355 (PVGFDLMDRK…QSIWDTPDAQ (92 aa)) are head domain (RuvB-H). DNA is bound by residues Arg-300, Arg-319, and Arg-324.

This sequence belongs to the RuvB family. In terms of assembly, homohexamer. Forms an RuvA(8)-RuvB(12)-Holliday junction (HJ) complex. HJ DNA is sandwiched between 2 RuvA tetramers; dsDNA enters through RuvA and exits via RuvB. An RuvB hexamer assembles on each DNA strand where it exits the tetramer. Each RuvB hexamer is contacted by two RuvA subunits (via domain III) on 2 adjacent RuvB subunits; this complex drives branch migration. In the full resolvosome a probable DNA-RuvA(4)-RuvB(12)-RuvC(2) complex forms which resolves the HJ.

Its subcellular location is the cytoplasm. The catalysed reaction is ATP + H2O = ADP + phosphate + H(+). Its function is as follows. The RuvA-RuvB-RuvC complex processes Holliday junction (HJ) DNA during genetic recombination and DNA repair, while the RuvA-RuvB complex plays an important role in the rescue of blocked DNA replication forks via replication fork reversal (RFR). RuvA specifically binds to HJ cruciform DNA, conferring on it an open structure. The RuvB hexamer acts as an ATP-dependent pump, pulling dsDNA into and through the RuvAB complex. RuvB forms 2 homohexamers on either side of HJ DNA bound by 1 or 2 RuvA tetramers; 4 subunits per hexamer contact DNA at a time. Coordinated motions by a converter formed by DNA-disengaged RuvB subunits stimulates ATP hydrolysis and nucleotide exchange. Immobilization of the converter enables RuvB to convert the ATP-contained energy into a lever motion, pulling 2 nucleotides of DNA out of the RuvA tetramer per ATP hydrolyzed, thus driving DNA branch migration. The RuvB motors rotate together with the DNA substrate, which together with the progressing nucleotide cycle form the mechanistic basis for DNA recombination by continuous HJ branch migration. Branch migration allows RuvC to scan DNA until it finds its consensus sequence, where it cleaves and resolves cruciform DNA. This chain is Holliday junction branch migration complex subunit RuvB, found in Burkholderia multivorans (strain ATCC 17616 / 249).